We begin with the raw amino-acid sequence, 430 residues long: Serine--tRNA ligase (430 aa).

237 to 239 provides a ligand contact to L-serine; sequence TAE. Residue 268-270 coordinates ATP; the sequence is RSE. Glu291 lines the L-serine pocket. Residue 355–358 coordinates ATP; sequence EISS. L-serine is bound at residue Ser391.

It belongs to the class-II aminoacyl-tRNA synthetase family. Type-1 seryl-tRNA synthetase subfamily. Homodimer. The tRNA molecule binds across the dimer.

The protein resides in the cytoplasm. The catalysed reaction is tRNA(Ser) + L-serine + ATP = L-seryl-tRNA(Ser) + AMP + diphosphate + H(+). The enzyme catalyses tRNA(Sec) + L-serine + ATP = L-seryl-tRNA(Sec) + AMP + diphosphate + H(+). It participates in aminoacyl-tRNA biosynthesis; selenocysteinyl-tRNA(Sec) biosynthesis; L-seryl-tRNA(Sec) from L-serine and tRNA(Sec): step 1/1. Its function is as follows. Catalyzes the attachment of serine to tRNA(Ser). Is also able to aminoacylate tRNA(Sec) with serine, to form the misacylated tRNA L-seryl-tRNA(Sec), which will be further converted into selenocysteinyl-tRNA(Sec). The sequence is that of Serine--tRNA ligase from Shigella dysenteriae serotype 1 (strain Sd197).